A 111-amino-acid polypeptide reads, in one-letter code: Protein YibV (111 aa).

This chain is Protein YibV (yibV), found in Escherichia coli O157:H7.